A 133-amino-acid chain; its full sequence is Late embryogenesis abundant protein B19.3 (133 aa).

The disordered stretch occupies residues 1–133 (MASGQQERSE…IDESKFKTKS (133 aa)). Composition is skewed to basic and acidic residues over residues 7-19 (ERSE…REGE), 32-102 (EAQE…EMGR), and 113-133 (GGER…KTKS). 3 tandem repeats follow at residues 24–43 (GGTG…GRSR), 44–63 (GGQT…MGHK), and 64–83 (GGET…MGHK). The tract at residues 24-83 (GGTGGKTLEAQEHLAEGRSRGGQTRKDQLGEEGYREMGHKGGETRKEQLGEEGYREMGHK) is 3 X 20 AA tandem repeats.

It belongs to the small hydrophilic plant seed protein family.

Functionally, lea proteins are late embryonic proteins abundant in higher plant seed embryos. The polypeptide is Late embryogenesis abundant protein B19.3 (B19.3) (Hordeum vulgare (Barley)).